Reading from the N-terminus, the 73-residue chain is MKSAIHPDYHTIKVVMTDGTEYTTRSTWGKEGDTMNLDIDPTTHPAWTGGQQTLLDRGGRLSKFKKRFEGFGL.

Belongs to the bacterial ribosomal protein bL31 family. Type A subfamily. Part of the 50S ribosomal subunit.

Binds the 23S rRNA. The chain is Large ribosomal subunit protein bL31 from Mesorhizobium japonicum (strain LMG 29417 / CECT 9101 / MAFF 303099) (Mesorhizobium loti (strain MAFF 303099)).